Here is a 421-residue protein sequence, read N- to C-terminus: Gamma-glutamyl phosphate reductase (421 aa).

The protein belongs to the gamma-glutamyl phosphate reductase family.

Its subcellular location is the cytoplasm. The catalysed reaction is L-glutamate 5-semialdehyde + phosphate + NADP(+) = L-glutamyl 5-phosphate + NADPH + H(+). Its pathway is amino-acid biosynthesis; L-proline biosynthesis; L-glutamate 5-semialdehyde from L-glutamate: step 2/2. Its function is as follows. Catalyzes the NADPH-dependent reduction of L-glutamate 5-phosphate into L-glutamate 5-semialdehyde and phosphate. The product spontaneously undergoes cyclization to form 1-pyrroline-5-carboxylate. The chain is Gamma-glutamyl phosphate reductase from Roseobacter denitrificans (strain ATCC 33942 / OCh 114) (Erythrobacter sp. (strain OCh 114)).